The chain runs to 129 residues: MSNIPTELKYASSHEWIRKEEDGSYTVGITEHAQELLGDMVFVELPEVGDTVTAGEDCAVAESVKAASDIYAPISGEVIAVNEALEDSPELVNSSAYGEGWFFRVMPSDESEVDALLDAEGYQAVIDED.

Positions 24–106 (SYTVGITEHA…YGEGWFFRVM (83 aa)) constitute a Lipoyl-binding domain. At lysine 65 the chain carries N6-lipoyllysine.

It belongs to the GcvH family. The glycine cleavage system is composed of four proteins: P, T, L and H. (R)-lipoate is required as a cofactor.

The glycine cleavage system catalyzes the degradation of glycine. The H protein shuttles the methylamine group of glycine from the P protein to the T protein. The polypeptide is Glycine cleavage system H protein (Shewanella baltica (strain OS185)).